The following is a 21-amino-acid chain: Alpha-aminoadipic semialdehyde dehydrogenase (21 aa).

Belongs to the aldehyde dehydrogenase family. Homotetramer.

The enzyme catalyses (S)-2-amino-6-oxohexanoate + NADP(+) + H2O = L-2-aminoadipate + NADPH + 2 H(+). It carries out the reaction (S)-2-amino-6-oxohexanoate + NAD(+) + H2O = L-2-aminoadipate + NADH + 2 H(+). The polypeptide is Alpha-aminoadipic semialdehyde dehydrogenase (aldh7a1) (Ctenopharyngodon idella (Grass carp)).